Consider the following 543-residue polypeptide: Reticulophagy regulator 2 (543 aa).

3 helical membrane passes run 12 to 32 (AGGGPGMGLSLGLGLGLSLGM), 100 to 120 (SLRPFFLLSVSLLAYFLLDLW), and 204 to 224 (VPGIMISYIVLLSILLWPLVV). The span at 254 to 265 (LHHKHDKRKRQG) shows a compositional bias: basic residues. The disordered stretch occupies residues 254–287 (LHHKHDKRKRQGKNAPPGGDEPLAETESESEAEL). The span at 275–285 (PLAETESESEA) shows a compositional bias: acidic residues. Threonine 279 is modified (phosphothreonine). 4 positions are modified to phosphoserine: serine 281, serine 283, serine 291, and serine 311. Position 334 is a phosphothreonine (threonine 334). Disordered stretches follow at residues 336–394 (VSED…DVAA) and 411–486 (HFNG…EEEA). Phosphoserine occurs at positions 337, 344, 347, and 385. A compositionally biased stretch (pro residues) spans 461–480 (APSPSILPPVPQDSPQPLPA). An LIR motif motif is present at residues 490–495 (EDFELL). Residues 504-543 (NAELGLEPETPPKPPDAPPLGPDIHSLVQSDQEAQAVAEP) form a disordered region. The segment covering 512 to 524 (ETPPKPPDAPPLG) has biased composition (pro residues).

This sequence belongs to the RETREG family. Interacts with ATG8 family modifier proteins MAP1LC3A, MAP1LC3B, MAP1LC3C, GABARAP, GABARAPL1 and GABARAPL2. Shows higher affinity for GABARAPL1 than for MAP1LC3B. Interacts with CANX.

It is found in the endoplasmic reticulum membrane. Its function is as follows. Endoplasmic reticulum (ER)-anchored autophagy regulator which exists in an inactive state under basal conditions but is activated following cellular stress. When activated, induces ER fragmentation and mediates ER delivery into lysosomes through sequestration into autophagosomes via interaction with ATG8 family proteins. Required for collagen quality control in a LIR motif-independent manner. This chain is Reticulophagy regulator 2, found in Homo sapiens (Human).